The sequence spans 186 residues: Peptidyl-tRNA hydrolase (186 aa).

Residue Tyr14 participates in tRNA binding. His19 serves as the catalytic Proton acceptor. 3 residues coordinate tRNA: Tyr64, Asn66, and Asn112.

It belongs to the PTH family. As to quaternary structure, monomer.

It is found in the cytoplasm. It catalyses the reaction an N-acyl-L-alpha-aminoacyl-tRNA + H2O = an N-acyl-L-amino acid + a tRNA + H(+). In terms of biological role, hydrolyzes ribosome-free peptidyl-tRNAs (with 1 or more amino acids incorporated), which drop off the ribosome during protein synthesis, or as a result of ribosome stalling. Catalyzes the release of premature peptidyl moieties from peptidyl-tRNA molecules trapped in stalled 50S ribosomal subunits, and thus maintains levels of free tRNAs and 50S ribosomes. This chain is Peptidyl-tRNA hydrolase, found in Lachnospira eligens (strain ATCC 27750 / DSM 3376 / VPI C15-48 / C15-B4) (Eubacterium eligens).